A 38-amino-acid polypeptide reads, in one-letter code: Large ribosomal subunit protein bL36 (38 aa).

The protein belongs to the bacterial ribosomal protein bL36 family.

This chain is Large ribosomal subunit protein bL36, found in Flavobacterium psychrophilum (strain ATCC 49511 / DSM 21280 / CIP 103535 / JIP02/86).